Reading from the N-terminus, the 205-residue chain is Probable GTP-binding protein EngB (205 aa).

Residues 25 to 199 (NGIEIAFIGY…KLSLNSSYKK (175 aa)) form the EngB-type G domain. GTP is bound by residues 33-40 (GYSNTGKS), 60-64 (GRTQL), 78-81 (DLPG), 145-148 (TKCD), and 178-180 (FSS). Mg(2+) contacts are provided by S40 and T62.

It belongs to the TRAFAC class TrmE-Era-EngA-EngB-Septin-like GTPase superfamily. EngB GTPase family. The cofactor is Mg(2+).

In terms of biological role, necessary for normal cell division and for the maintenance of normal septation. This chain is Probable GTP-binding protein EngB, found in Buchnera aphidicola subsp. Acyrthosiphon pisum (strain 5A).